The following is a 226-amino-acid chain: 7-cyano-7-deazaguanine synthase (226 aa).

7–17 (LSGGMDSLVTT) serves as a coordination point for ATP. The Zn(2+) site is built by cysteine 187, cysteine 195, cysteine 198, and cysteine 201.

The protein belongs to the QueC family. The cofactor is Zn(2+).

The enzyme catalyses 7-carboxy-7-deazaguanine + NH4(+) + ATP = 7-cyano-7-deazaguanine + ADP + phosphate + H2O + H(+). The protein operates within purine metabolism; 7-cyano-7-deazaguanine biosynthesis. Catalyzes the ATP-dependent conversion of 7-carboxy-7-deazaguanine (CDG) to 7-cyano-7-deazaguanine (preQ(0)). The protein is 7-cyano-7-deazaguanine synthase of Chloroherpeton thalassium (strain ATCC 35110 / GB-78).